Reading from the N-terminus, the 232-residue chain is Aspartate/glutamate leucyltransferase (232 aa).

It belongs to the R-transferase family. Bpt subfamily.

The protein resides in the cytoplasm. It carries out the reaction N-terminal L-glutamyl-[protein] + L-leucyl-tRNA(Leu) = N-terminal L-leucyl-L-glutamyl-[protein] + tRNA(Leu) + H(+). It catalyses the reaction N-terminal L-aspartyl-[protein] + L-leucyl-tRNA(Leu) = N-terminal L-leucyl-L-aspartyl-[protein] + tRNA(Leu) + H(+). Functions in the N-end rule pathway of protein degradation where it conjugates Leu from its aminoacyl-tRNA to the N-termini of proteins containing an N-terminal aspartate or glutamate. The sequence is that of Aspartate/glutamate leucyltransferase from Vibrio vulnificus (strain CMCP6).